A 1299-amino-acid polypeptide reads, in one-letter code: MARQMTSSQFHKSKTLDNKYMLGDEIGKGAYGRVYIGLDLENGDFVAIKQVSLENIVQEDLNTIMQEIDLLKNLNHKNIVKYLGSLKTKTHLHIILEYVENGSLANIIKPNKFGPFPESLVTVYIAQVLEGLVYLHEQGVIHRDIKGANILTTKEGLVKLADFGVATKLNEADVNTHSVVGTPYWMAPEVIEMSGVCAASDIWSVGCTVIELLTCVPPYYDLQPMPALFRIVQDDSPPIPDSLSPDITDFLRQCFKKDSRQRPDAKTLLSHPWIRNSRRALQSSLRHSGTIRYMKGADSSSEKDGEGSQDIAESVSAEKVGMSKTNSKSKLGVGSFRSEKDQSSASDIGEERADSEDDIMSDQGPTLSIHDNKSSLQSSTCSISSDAKGTSQDGKSEPDGNLEMEASEGRRKASATKQVGKESSIQMQQRSHSFGPKGEDRGLRKAVKTPSSYGGNELTRFSDPPGDACLHDLFHPLNKVPEGKLNEASASTPASNANQGDSPVADGGKNDLATKLRARIAQKQMEGETGHSNDGGDLFRLMMGVLKDDVIDIDGLVFDEKASPDNLLPLQAVEFSRLVSSLRPSETEDAIVTSCQKLVAMFRHRPEQKVVFVTQHGFLPVMDLLDSPKSRVTCAVLQLINEIIKDNIDFQENACLVGLIPLVMSFAGPERDRSREIRKEAAYFLQQLCQSSSLTLQMFIACRGIPVLVGFLEADYAKYRSMVHLAIDGMWQVFKLKRSTPRNDFCRIAAKNGILLRLINTLYSLNEATLLASEGRSGQLDQHEALLSVIDHPDVLKTRPGGGEEPSNSQRSDLYQPDGDRPRSSSAALDATEDVKQHHRISISSNRTSTDKIQKLAESASNGYAVTQPEQVRPLLSLLEKEPPSRHVSGQLDYVKHIAGLEKHESILPLLRASIDTMPRYFSKTMSKKVMAIEGAASASGVLSGSGVLNARLGSDTSSGLLSHMVTTLSAEVASQYLEKVADLLLEFARADTTVKSYMCSQSLLSRLFHMFNRVEPPILLKILKCTNHLSTDPNCLESLQRADAIKHLIPNLEVKEGNLVDQIHHEVLSALFNLCKINKRRQEQAAENGIIPHLMLFVMSDSPLKQYALPLLCDMAHASRNSREQLRSHGGLDVYLSLLDDEYWSVIALDSIAVCLAQDNDNRKVEQALLKDDAIYTLVNFFQSCPERHFVHILEPFLKIITKSSRINTTLAVNGLTPLLIARLDHQDAIARLNLLKLIKAVYEHHPRPKQLIVENDLPQRLQNLIEERREGQHLGGQVLVKQMATSLLKALHINTVL.

The 255-residue stretch at 20–274 folds into the Protein kinase domain; it reads YMLGDEIGKG…AKTLLSHPWI (255 aa). HEAT repeat units follow at residues 25–62 and 86–125; these read EIGK…EDLN and LKTK…TVYI. Residues 26-34 and K49 each bind ATP; that span reads IGKGAYGRV. D144 functions as the Proton acceptor in the catalytic mechanism. The HEAT 3 repeat unit spans residues 218-256; that stretch reads PYYDLQPMPALFRIVQDDSPPIPDSLSPDITDFLRQCFK. Disordered stretches follow at residues 291 to 458 and 483 to 509; these read IRYM…GNEL and GKLN…DGGK. Residues 374-385 are compositionally biased toward low complexity; the sequence is SSLQSSTCSISS. Polar residues-rich tracts occupy residues 415-432 and 488-501; these read ATKQ…QRSH and ASAS…NQGD. HEAT repeat units lie at residues 532 to 570, 611 to 649, 653 to 694, 698 to 736, 743 to 780, 781 to 820, 868 to 900, 901 to 939, 955 to 994, 998 to 1036, 1043 to 1081, 1085 to 1122, 1125 to 1164, 1186 to 1210, 1211 to 1249, and 1279 to 1299; these read SNDG…LLPL, VFVT…DNID, NACL…SSSL, MFIA…VFKL, NDFC…SGQL, DQHE…PDGD, QPEQ…HIAG, LEKH…AASA, SDTS…ADTT, YMCS…DPNC, ADAI…INKR, QAAE…ASRN, EQLR…NDNR, CPER…RINT, TLAV…HHPR, and QVLV…NTVL. The disordered stretch occupies residues 795–852; sequence VLKTRPGGGEEPSNSQRSDLYQPDGDRPRSSSAALDATEDVKQHHRISISSNRTSTDK.

It belongs to the protein kinase superfamily. Ser/Thr protein kinase family. In terms of processing, autophosphorylated. As to expression, expressed in both the sporophytic and the gametophytic tissues, especially in dividing cells.

Its subcellular location is the cytoplasm. It is found in the cytoskeleton. The protein resides in the microtubule organizing center. It localises to the nucleus. The protein localises to the nucleolus. Its subcellular location is the cell membrane. The catalysed reaction is L-seryl-[protein] + ATP = O-phospho-L-seryl-[protein] + ADP + H(+). It carries out the reaction L-threonyl-[protein] + ATP = O-phospho-L-threonyl-[protein] + ADP + H(+). Functionally, serine/threonine-protein kinase involved in the spatial and temporal control system organizing cortical activities in mitotic and postmitotic cells. Required for the normal functioning of the plasma membrane in developing pollen. Involved in the regulation of cell expansion and embryo development. The chain is MAP3K epsilon protein kinase 1 from Brassica napus (Rape).